A 398-amino-acid polypeptide reads, in one-letter code: uncharacterized protein (398 aa).

Residues 235 to 351 form the CobW C-terminal domain; the sequence is VAIVEFSARR…DIVNALNAAL (117 aa).

This is an uncharacterized protein from Mycobacterium bovis (strain ATCC BAA-935 / AF2122/97).